The primary structure comprises 151 residues: 3-hydroxyacyl-[acyl-carrier-protein] dehydratase FabZ (151 aa).

His-49 is a catalytic residue.

Belongs to the thioester dehydratase family. FabZ subfamily.

The protein localises to the cytoplasm. It carries out the reaction a (3R)-hydroxyacyl-[ACP] = a (2E)-enoyl-[ACP] + H2O. Functionally, involved in unsaturated fatty acids biosynthesis. Catalyzes the dehydration of short chain beta-hydroxyacyl-ACPs and long chain saturated and unsaturated beta-hydroxyacyl-ACPs. The sequence is that of 3-hydroxyacyl-[acyl-carrier-protein] dehydratase FabZ from Wolinella succinogenes (strain ATCC 29543 / DSM 1740 / CCUG 13145 / JCM 31913 / LMG 7466 / NCTC 11488 / FDC 602W) (Vibrio succinogenes).